Here is a 171-residue protein sequence, read N- to C-terminus: 3-hydroxydecanoyl-[acyl-carrier-protein] dehydratase (171 aa).

Residue H71 is part of the active site.

The protein belongs to the thioester dehydratase family. FabA subfamily. As to quaternary structure, homodimer.

Its subcellular location is the cytoplasm. The enzyme catalyses a (3R)-hydroxyacyl-[ACP] = a (2E)-enoyl-[ACP] + H2O. It catalyses the reaction (3R)-hydroxydecanoyl-[ACP] = (2E)-decenoyl-[ACP] + H2O. The catalysed reaction is (2E)-decenoyl-[ACP] = (3Z)-decenoyl-[ACP]. Its pathway is lipid metabolism; fatty acid biosynthesis. In terms of biological role, necessary for the introduction of cis unsaturation into fatty acids. Catalyzes the dehydration of (3R)-3-hydroxydecanoyl-ACP to E-(2)-decenoyl-ACP and then its isomerization to Z-(3)-decenoyl-ACP. Can catalyze the dehydratase reaction for beta-hydroxyacyl-ACPs with saturated chain lengths up to 16:0, being most active on intermediate chain length. The protein is 3-hydroxydecanoyl-[acyl-carrier-protein] dehydratase of Sinorhizobium fredii (strain NBRC 101917 / NGR234).